The chain runs to 239 residues: 1-(5-phosphoribosyl)-5-[(5-phosphoribosylamino)methylideneamino] imidazole-4-carboxamide isomerase (239 aa).

D8 serves as the catalytic Proton acceptor. D129 acts as the Proton donor in catalysis.

It belongs to the HisA/HisF family.

It is found in the cytoplasm. The enzyme catalyses 1-(5-phospho-beta-D-ribosyl)-5-[(5-phospho-beta-D-ribosylamino)methylideneamino]imidazole-4-carboxamide = 5-[(5-phospho-1-deoxy-D-ribulos-1-ylimino)methylamino]-1-(5-phospho-beta-D-ribosyl)imidazole-4-carboxamide. It functions in the pathway amino-acid biosynthesis; L-histidine biosynthesis; L-histidine from 5-phospho-alpha-D-ribose 1-diphosphate: step 4/9. The polypeptide is 1-(5-phosphoribosyl)-5-[(5-phosphoribosylamino)methylideneamino] imidazole-4-carboxamide isomerase (Roseobacter denitrificans (strain ATCC 33942 / OCh 114) (Erythrobacter sp. (strain OCh 114))).